Consider the following 82-residue polypeptide: Turripeptide IX-07 (82 aa).

The first 21 residues, 1 to 21, serve as a signal peptide directing secretion; it reads MGFYMLLTVALLLTSLMNVEA. A propeptide spanning residues 22-39 is cleaved from the precursor; it reads TPVNQAERSALEKSGLGN. Cystine bridges form between C48-C70, C55-C74, and C60-C81.

In terms of tissue distribution, expressed by the venom duct.

The protein resides in the secreted. The chain is Turripeptide IX-07 from Gemmula speciosa (Splendid gem-turris).